The sequence spans 339 residues: MSTIILGIESSCDDTSAAVIKDGYLLSNVVSSQAVHEAYGGVVPELASRAHQQNIVPVVHEALKRAGVTKEELSAVAFTRGPGLMGSLLVGVSFAKGFARSLNIPMIDVNHLTGHVLAHFIKEEGEANEQPDFPFLCLLVSGGNSQIILVKAYNDMEILGQTIDDAAGEAIDKCSKVMGLGYPGGPIIDRLARQGNPKAYTFSKPHISGLDYSFSGLKTSFLYSLRDWMKEDPDFIEHHKNDLAASLEATVVDILMDKLRKAAKQYKINEVAVAGGVSANNGLRNAFREHAEKYGWKIFIPKFSYTTDNAAMIAITGYFKYQDKDFCSIEQPAYSRVTL.

2 residues coordinate Fe cation: His-111 and His-115. Residues 139–143 (LVSGG), Asp-172, Gly-185, Asp-189, and Asn-280 contribute to the substrate site. A Fe cation-binding site is contributed by Asp-308.

It belongs to the KAE1 / TsaD family. Requires Fe(2+) as cofactor.

It localises to the cytoplasm. It catalyses the reaction L-threonylcarbamoyladenylate + adenosine(37) in tRNA = N(6)-L-threonylcarbamoyladenosine(37) in tRNA + AMP + H(+). Functionally, required for the formation of a threonylcarbamoyl group on adenosine at position 37 (t(6)A37) in tRNAs that read codons beginning with adenine. Is involved in the transfer of the threonylcarbamoyl moiety of threonylcarbamoyl-AMP (TC-AMP) to the N6 group of A37, together with TsaE and TsaB. TsaD likely plays a direct catalytic role in this reaction. This chain is tRNA N6-adenosine threonylcarbamoyltransferase, found in Bacteroides fragilis (strain ATCC 25285 / DSM 2151 / CCUG 4856 / JCM 11019 / LMG 10263 / NCTC 9343 / Onslow / VPI 2553 / EN-2).